The chain runs to 118 residues: Protein BEX4 (118 aa).

Positions 14 to 50 (VEKDKKDKKGGKASKQSEEEPHHLEEVENKKPGGNVR) are disordered. The span at 28 to 44 (KQSEEEPHHLEEVENKK) shows a compositional bias: basic and acidic residues. Residues 30 to 88 (SEEEPHHLEEVENKKPGGNVRRKVRRLVPNFLWAIPNRHVDRNEGGEDVGRFVVQGTEV) form an interaction with SIRT2 region. The interval 30-118 (SEEEPHHLEE…DNHYDFCLIP (89 aa)) is interaction with alpha-tubulin. C115 lines the Zn(2+) pocket.

The protein belongs to the BEX family. Interacts with alpha-tubulin. Interacts with SIRT2. Ubiquitinated and degraded by the proteasome. Expressed in both Sertoli and germ cells as well as interstitial area of the testis (at protein level).

The protein localises to the cytoplasm. It localises to the cytoskeleton. It is found in the spindle pole. Its subcellular location is the nucleus. Its function is as follows. May play a role in microtubule deacetylation by negatively regulating the SIRT2 deacetylase activity toward alpha-tubulin and thereby participate in the control of cell cycle progression and genomic stability. In absence of reductive stress, acts as a pseudosubstrate for the CRL2(FEM1B) complex: associates with FEM1B via zinc, thereby preventing association between FEM1B and its substrates. This is Protein BEX4 from Mus musculus (Mouse).